The sequence spans 438 residues: Histidine--tRNA ligase (438 aa).

This sequence belongs to the class-II aminoacyl-tRNA synthetase family. Homodimer.

The protein localises to the cytoplasm. The catalysed reaction is tRNA(His) + L-histidine + ATP = L-histidyl-tRNA(His) + AMP + diphosphate + H(+). In Blochmanniella pennsylvanica (strain BPEN), this protein is Histidine--tRNA ligase.